Reading from the N-terminus, the 395-residue chain is Probable sugar efflux transporter (395 aa).

12 helical membrane-spanning segments follow: residues 13–33 (VVSL…PVAL), 48–68 (VGLI…PCML), 82–102 (IFIL…YWVL), 107–127 (IGVA…VVRL), 134–154 (AQAL…GLPL), 168–188 (FVLI…LLPV), 207–227 (PALL…FTAY), 244–264 (FTTI…MLFS), 272–292 (AGFL…LLPL), 297–317 (WSLS…SLGM), 331–351 (VAMA…ALLG), and 363–383 (IGYM…FTFV).

Belongs to the major facilitator superfamily. SotB (TC 2.A.1.2) family.

The protein resides in the cell inner membrane. Involved in the efflux of sugars. The physiological role may be the reduction of the intracellular concentration of toxic sugars or sugar metabolites. The protein is Probable sugar efflux transporter of Pectobacterium atrosepticum (strain SCRI 1043 / ATCC BAA-672) (Erwinia carotovora subsp. atroseptica).